A 161-amino-acid polypeptide reads, in one-letter code: Small heat shock protein ibp (161 aa).

The sHSP domain occupies 35-150 (EKPLSDTPAY…KPKKIFINIP (116 aa)).

This sequence belongs to the small heat shock protein (HSP20) family.

In Buchnera aphidicola subsp. Schizaphis graminum (strain Sg), this protein is Small heat shock protein ibp (ibp).